A 260-amino-acid polypeptide reads, in one-letter code: PsbP domain-containing protein 4, chloroplastic (260 aa).

This sequence belongs to the PsbP family.

It localises to the plastid. It is found in the chloroplast thylakoid lumen. In Arabidopsis thaliana (Mouse-ear cress), this protein is PsbP domain-containing protein 4, chloroplastic (PPD4).